We begin with the raw amino-acid sequence, 84 residues long: Exodeoxyribonuclease 7 small subunit (84 aa).

This sequence belongs to the XseB family. Heterooligomer composed of large and small subunits.

Its subcellular location is the cytoplasm. It catalyses the reaction Exonucleolytic cleavage in either 5'- to 3'- or 3'- to 5'-direction to yield nucleoside 5'-phosphates.. In terms of biological role, bidirectionally degrades single-stranded DNA into large acid-insoluble oligonucleotides, which are then degraded further into small acid-soluble oligonucleotides. In Bartonella bacilliformis (strain ATCC 35685 / KC583 / Herrer 020/F12,63), this protein is Exodeoxyribonuclease 7 small subunit.